The primary structure comprises 541 residues: Eukaryotic translation initiation factor 3 subunit L (541 aa).

The region spanning 308–516 (TFSDILLYIQ…IHIADTKVSH (209 aa)) is the PCI domain.

Belongs to the eIF-3 subunit L family. As to quaternary structure, component of the eukaryotic translation initiation factor 3 (eIF-3) complex. The eIF-3 complex interacts with pix.

It is found in the cytoplasm. Functionally, component of the eukaryotic translation initiation factor 3 (eIF-3) complex, which is involved in protein synthesis of a specialized repertoire of mRNAs and, together with other initiation factors, stimulates binding of mRNA and methionyl-tRNAi to the 40S ribosome. The eIF-3 complex specifically targets and initiates translation of a subset of mRNAs involved in cell proliferation. This is Eukaryotic translation initiation factor 3 subunit L from Drosophila pseudoobscura pseudoobscura (Fruit fly).